The chain runs to 205 residues: Ribosomal RNA small subunit methyltransferase G (205 aa).

Residues Gly-73, Leu-78, 124-125, and Arg-139 each bind S-adenosyl-L-methionine; that span reads VE.

Belongs to the methyltransferase superfamily. RNA methyltransferase RsmG family.

It is found in the cytoplasm. The enzyme catalyses guanosine(527) in 16S rRNA + S-adenosyl-L-methionine = N(7)-methylguanosine(527) in 16S rRNA + S-adenosyl-L-homocysteine. Specifically methylates the N7 position of guanine in position 527 of 16S rRNA. The sequence is that of Ribosomal RNA small subunit methyltransferase G from Erwinia tasmaniensis (strain DSM 17950 / CFBP 7177 / CIP 109463 / NCPPB 4357 / Et1/99).